The sequence spans 361 residues: Molybdenum import ATP-binding protein ModC (361 aa).

Residues 1–228 (MLTINIEKQL…EQMRPWVPLQ (228 aa)) form the ABC transporter domain. ATP is bound at residue 31–38 (GRSGAGKT). One can recognise a Mop domain in the interval 289–356 (RSSIRNVLKG…IKGVTMTQMD (68 aa)).

The protein belongs to the ABC transporter superfamily. Molybdate importer (TC 3.A.1.8) family. As to quaternary structure, the complex is composed of two ATP-binding proteins (ModC), two transmembrane proteins (ModB) and a solute-binding protein (ModA).

The protein resides in the cell inner membrane. The catalysed reaction is molybdate(out) + ATP + H2O = molybdate(in) + ADP + phosphate + H(+). Functionally, part of the ABC transporter complex ModABC involved in molybdenum import. Responsible for energy coupling to the transport system. This chain is Molybdenum import ATP-binding protein ModC, found in Shewanella oneidensis (strain ATCC 700550 / JCM 31522 / CIP 106686 / LMG 19005 / NCIMB 14063 / MR-1).